The primary structure comprises 81 residues: Cytochrome c oxidase subunit 7B2, mitochondrial (81 aa).

Residues 1-25 constitute a mitochondrion transit peptide; it reads MMFPLARNALSSLKIRSILQSMARQ. Residues 26 to 33 lie on the Mitochondrial matrix side of the membrane; it reads SHVKHSPD. A helical transmembrane segment spans residues 34–60; sequence FHDKYGNAVLASGTAFCVVAWVFTATQ. At 61 to 81 the chain is on the mitochondrial intermembrane side; the sequence is IGIEWNLSPVGRVTPKEWKHQ.

It belongs to the cytochrome c oxidase VIIb family. As to quaternary structure, component of the cytochrome c oxidase (complex IV, CIV), a multisubunit enzyme composed of 14 subunits. The complex is composed of a catalytic core of 3 subunits MT-CO1, MT-CO2 and MT-CO3, encoded in the mitochondrial DNA, and 11 supernumerary subunits COX4I, COX5A, COX5B, COX6A, COX6B, COX6C, COX7A, COX7B, COX7C, COX8 and NDUFA4, which are encoded in the nuclear genome. The complex exists as a monomer or a dimer and forms supercomplexes (SCs) in the inner mitochondrial membrane with NADH-ubiquinone oxidoreductase (complex I, CI) and ubiquinol-cytochrome c oxidoreductase (cytochrome b-c1 complex, complex III, CIII), resulting in different assemblies (supercomplex SCI(1)III(2)IV(1) and megacomplex MCI(2)III(2)IV(2)).

Its subcellular location is the mitochondrion inner membrane. It functions in the pathway energy metabolism; oxidative phosphorylation. In terms of biological role, component of the cytochrome c oxidase, the last enzyme in the mitochondrial electron transport chain which drives oxidative phosphorylation. The respiratory chain contains 3 multisubunit complexes succinate dehydrogenase (complex II, CII), ubiquinol-cytochrome c oxidoreductase (cytochrome b-c1 complex, complex III, CIII) and cytochrome c oxidase (complex IV, CIV), that cooperate to transfer electrons derived from NADH and succinate to molecular oxygen, creating an electrochemical gradient over the inner membrane that drives transmembrane transport and the ATP synthase. Cytochrome c oxidase is the component of the respiratory chain that catalyzes the reduction of oxygen to water. Electrons originating from reduced cytochrome c in the intermembrane space (IMS) are transferred via the dinuclear copper A center (CU(A)) of subunit 2 and heme A of subunit 1 to the active site in subunit 1, a binuclear center (BNC) formed by heme A3 and copper B (CU(B)). The BNC reduces molecular oxygen to 2 water molecules using 4 electrons from cytochrome c in the IMS and 4 protons from the mitochondrial matrix. In Macaca fascicularis (Crab-eating macaque), this protein is Cytochrome c oxidase subunit 7B2, mitochondrial (COX7B2).